Here is a 332-residue protein sequence, read N- to C-terminus: 4-hydroxythreonine-4-phosphate dehydrogenase (332 aa).

Positions 136 and 137 each coordinate substrate. Histidine 166, histidine 211, and histidine 266 together coordinate a divalent metal cation. Positions 274, 283, and 292 each coordinate substrate.

The protein belongs to the PdxA family. In terms of assembly, homodimer. Zn(2+) serves as cofactor. Requires Mg(2+) as cofactor. Co(2+) is required as a cofactor.

The protein localises to the cytoplasm. The catalysed reaction is 4-(phosphooxy)-L-threonine + NAD(+) = 3-amino-2-oxopropyl phosphate + CO2 + NADH. It participates in cofactor biosynthesis; pyridoxine 5'-phosphate biosynthesis; pyridoxine 5'-phosphate from D-erythrose 4-phosphate: step 4/5. Its function is as follows. Catalyzes the NAD(P)-dependent oxidation of 4-(phosphooxy)-L-threonine (HTP) into 2-amino-3-oxo-4-(phosphooxy)butyric acid which spontaneously decarboxylates to form 3-amino-2-oxopropyl phosphate (AHAP). The chain is 4-hydroxythreonine-4-phosphate dehydrogenase from Wigglesworthia glossinidia brevipalpis.